Consider the following 409-residue polypeptide: Broad specificity amino-acid racemase (409 aa).

Residues 1–25 (MRLKKTLLSIAIAAATFTPAMHSIA) form the signal peptide. A disulfide bridge connects residues Cys72 and Cys98. Lys76 functions as the Proton acceptor in the catalytic mechanism. The residue at position 76 (Lys76) is an N6-(pyridoxal phosphate)lysine. Arg175 is a substrate binding site. Tyr301 serves as the catalytic Proton acceptor. Met349 contacts substrate.

It belongs to the alanine racemase family. Bsr subfamily. It depends on pyridoxal 5'-phosphate as a cofactor.

Its subcellular location is the periplasm. The catalysed reaction is an L-alpha-amino acid = a D-alpha-amino acid. It catalyses the reaction L-lysine = D-lysine. It carries out the reaction L-arginine = D-arginine. Its function is as follows. Amino-acid racemase able to utilize a broad range of substrates. The polypeptide is Broad specificity amino-acid racemase (Vibrio parahaemolyticus serotype O3:K6 (strain RIMD 2210633)).